The sequence spans 1185 residues: Zinc finger SWIM domain-containing protein 5 (1185 aa).

The segment covering 1–10 has biased composition (basic and acidic residues); it reads MADGGEREEL. 2 disordered regions span residues 1-45 and 123-153; these read MADG…GGAG and AGAA…GSAP. The SWIM-type zinc finger occupies 219 to 256; it reads YKVAISFDRCKITSVTCGCGNKDIFYCAHVVALSLYRI.

The sequence is that of Zinc finger SWIM domain-containing protein 5 (ZSWIM5) from Homo sapiens (Human).